Here is a 476-residue protein sequence, read N- to C-terminus: Ribulose bisphosphate carboxylase large chain (476 aa).

Positions 1-2 are excised as a propeptide; it reads MS. Pro-3 is modified (N-acetylproline). Residue Lys-14 is modified to N6,N6,N6-trimethyllysine. Positions 123 and 173 each coordinate substrate. Catalysis depends on Lys-175, which acts as the Proton acceptor. Lys-177 provides a ligand contact to substrate. Mg(2+)-binding residues include Lys-201, Asp-203, and Glu-204. Lys-201 carries the N6-carboxylysine modification. His-294 serves as the catalytic Proton acceptor. Residues Arg-295, His-327, and Ser-379 each coordinate substrate.

This sequence belongs to the RuBisCO large chain family. Type I subfamily. In terms of assembly, heterohexadecamer of 8 large chains and 8 small chains; disulfide-linked. The disulfide link is formed within the large subunit homodimers. Mg(2+) is required as a cofactor. In terms of processing, the disulfide bond which can form in the large chain dimeric partners within the hexadecamer appears to be associated with oxidative stress and protein turnover.

The protein resides in the plastid. Its subcellular location is the chloroplast. It catalyses the reaction 2 (2R)-3-phosphoglycerate + 2 H(+) = D-ribulose 1,5-bisphosphate + CO2 + H2O. The enzyme catalyses D-ribulose 1,5-bisphosphate + O2 = 2-phosphoglycolate + (2R)-3-phosphoglycerate + 2 H(+). Its function is as follows. RuBisCO catalyzes two reactions: the carboxylation of D-ribulose 1,5-bisphosphate, the primary event in carbon dioxide fixation, as well as the oxidative fragmentation of the pentose substrate in the photorespiration process. Both reactions occur simultaneously and in competition at the same active site. This is Ribulose bisphosphate carboxylase large chain from Zea mays (Maize).